Reading from the N-terminus, the 276-residue chain is 3-methyl-2-oxobutanoate hydroxymethyltransferase (276 aa).

Positions 49 and 88 each coordinate Mg(2+). Residues 49–50 (DS), Asp88, and Lys118 each bind 3-methyl-2-oxobutanoate. Mg(2+) is bound at residue Glu120. The active-site Proton acceptor is Glu187.

The protein belongs to the PanB family. Homodecamer; pentamer of dimers. The cofactor is Mg(2+).

It localises to the cytoplasm. It carries out the reaction 3-methyl-2-oxobutanoate + (6R)-5,10-methylene-5,6,7,8-tetrahydrofolate + H2O = 2-dehydropantoate + (6S)-5,6,7,8-tetrahydrofolate. It functions in the pathway cofactor biosynthesis; (R)-pantothenate biosynthesis; (R)-pantoate from 3-methyl-2-oxobutanoate: step 1/2. Functionally, catalyzes the reversible reaction in which hydroxymethyl group from 5,10-methylenetetrahydrofolate is transferred onto alpha-ketoisovalerate to form ketopantoate. The sequence is that of 3-methyl-2-oxobutanoate hydroxymethyltransferase from Afipia carboxidovorans (strain ATCC 49405 / DSM 1227 / KCTC 32145 / OM5) (Oligotropha carboxidovorans).